A 264-amino-acid polypeptide reads, in one-letter code: S-adenosylmethionine decarboxylase proenzyme (264 aa).

Ser113 acts as the Schiff-base intermediate with substrate; via pyruvic acid in catalysis. A Pyruvic acid (Ser); by autocatalysis modification is found at Ser113. The active-site Proton acceptor; for processing activity is His118. Cys141 serves as the catalytic Proton donor; for catalytic activity.

It belongs to the prokaryotic AdoMetDC family. Type 2 subfamily. Heterooctamer of four alpha and four beta chains arranged as a tetramer of alpha/beta heterodimers. Pyruvate is required as a cofactor. Post-translationally, is synthesized initially as an inactive proenzyme. Formation of the active enzyme involves a self-maturation process in which the active site pyruvoyl group is generated from an internal serine residue via an autocatalytic post-translational modification. Two non-identical subunits are generated from the proenzyme in this reaction, and the pyruvate is formed at the N-terminus of the alpha chain, which is derived from the carboxyl end of the proenzyme. The post-translation cleavage follows an unusual pathway, termed non-hydrolytic serinolysis, in which the side chain hydroxyl group of the serine supplies its oxygen atom to form the C-terminus of the beta chain, while the remainder of the serine residue undergoes an oxidative deamination to produce ammonia and the pyruvoyl group blocking the N-terminus of the alpha chain.

It catalyses the reaction S-adenosyl-L-methionine + H(+) = S-adenosyl 3-(methylsulfanyl)propylamine + CO2. It participates in amine and polyamine biosynthesis; S-adenosylmethioninamine biosynthesis; S-adenosylmethioninamine from S-adenosyl-L-methionine: step 1/1. Its function is as follows. Catalyzes the decarboxylation of S-adenosylmethionine to S-adenosylmethioninamine (dcAdoMet), the propylamine donor required for the synthesis of the polyamines spermine and spermidine from the diamine putrescine. This is S-adenosylmethionine decarboxylase proenzyme from Azotobacter vinelandii (strain DJ / ATCC BAA-1303).